The following is a 26-amino-acid chain: DEAD-box ATP-dependent RNA helicase 1 (26 aa).

The Q motif motif lies at 1 to 10 (RELLMGIFEK). Position 11–16 (11–16 (NGTGKT)) interacts with ATP. The Helicase ATP-binding domain maps to 11–26 (NGTGKTAAFVIPLLQK).

This sequence belongs to the DEAD box helicase family. DDX6/DHH1 subfamily.

The protein resides in the cytoplasm. It localises to the P-body. The enzyme catalyses ATP + H2O = ADP + phosphate + H(+). In terms of biological role, ATP-dependent RNA helicase involved in mRNA turnover, and more specifically in mRNA decapping. The protein is DEAD-box ATP-dependent RNA helicase 1 of Catharanthus roseus (Madagascar periwinkle).